Here is a 195-residue protein sequence, read N- to C-terminus: Imidazoleglycerol-phosphate dehydratase (195 aa).

This sequence belongs to the imidazoleglycerol-phosphate dehydratase family.

It localises to the cytoplasm. It catalyses the reaction D-erythro-1-(imidazol-4-yl)glycerol 3-phosphate = 3-(imidazol-4-yl)-2-oxopropyl phosphate + H2O. It functions in the pathway amino-acid biosynthesis; L-histidine biosynthesis; L-histidine from 5-phospho-alpha-D-ribose 1-diphosphate: step 6/9. This Azoarcus sp. (strain BH72) protein is Imidazoleglycerol-phosphate dehydratase.